The sequence spans 396 residues: 1-deoxy-D-xylulose 5-phosphate reductoisomerase (396 aa).

6 residues coordinate NADPH: T17, G18, S19, I20, N47, and N130. K131 contacts 1-deoxy-D-xylulose 5-phosphate. E132 contributes to the NADPH binding site. D156 provides a ligand contact to Mn(2+). Residues S157, E158, S182, and H205 each contribute to the 1-deoxy-D-xylulose 5-phosphate site. E158 lines the Mn(2+) pocket. G211 serves as a coordination point for NADPH. 1-deoxy-D-xylulose 5-phosphate contacts are provided by S218, N223, K224, and E227. Position 227 (E227) interacts with Mn(2+).

Belongs to the DXR family. The cofactor is Mg(2+). It depends on Mn(2+) as a cofactor.

It catalyses the reaction 2-C-methyl-D-erythritol 4-phosphate + NADP(+) = 1-deoxy-D-xylulose 5-phosphate + NADPH + H(+). It participates in isoprenoid biosynthesis; isopentenyl diphosphate biosynthesis via DXP pathway; isopentenyl diphosphate from 1-deoxy-D-xylulose 5-phosphate: step 1/6. In terms of biological role, catalyzes the NADPH-dependent rearrangement and reduction of 1-deoxy-D-xylulose-5-phosphate (DXP) to 2-C-methyl-D-erythritol 4-phosphate (MEP). The sequence is that of 1-deoxy-D-xylulose 5-phosphate reductoisomerase from Rhizobium etli (strain CIAT 652).